The chain runs to 737 residues: MAKQVFQTTFAGRELIVETGQVAKQANGSVVVRYGESTVLTAAVMSKKMATGDFFPLQVNYEEKMYAAGKFPGGFMKREGRPSTDATLTARLIDRPIRPMFAEGFRNEVQVINTVLSYDENASAPMAAMFGSSLALSISDIPFDGPIAGVQVGYVDGQIIINPSQEQAEQSLLELTVAGTKHAINMVESGAKELSEEIMLEALLKGHEAVKELIAFQEEIVAAVGKEKAEVELLHVDAELQAEIIAAYNSDLQKAVQVEEKLAREAATQAVKDQVTAVYEEKYANHEEFDRIMRDVAEILEQMEHAEVRRLITEDKVRPDGRKVDEIRPLDAVVDFLPRVHGSGLFTRGQTQALSVLTLAPMGETQIIDGLDPEYKKRFMHHYNFPQYSVGETGRYGAPGRREIGHGALGERALAQVLPSLEEFPYAIRLVAEVLESNGSSSQASICAGTLALMAGGVPIKAPVAGIAMGLISDGNNYTVLTDIQGLEDHFGDMDFKVAGTRDGITALQMDIKIQGITAEILTEALAQAKKARFEILDVIEATIPEVRPELAPTAPKIDTIKIDVDKIKIVIGKGGETIDKIIAETGVKIDIDEEGNVSIYSSDQDAINRAKEIIAGLVREAKVDEVYRAKVVRIEKFGAFVNLFDKTDALVHISEMAWTRTNRVEDLVEIGDEVDVKVIKIDEKGRIDASMKALLPRPPKPEHDEKGEKSERPHRPRHHKDHKPKKEFTETPKDSE.

The Mg(2+) site is built by aspartate 489 and aspartate 495. One can recognise a KH domain in the interval 556–615 (PKIDTIKIDVDKIKIVIGKGGETIDKIIAETGVKIDIDEEGNVSIYSSDQDAINRAKEII). In terms of domain architecture, S1 motif spans 625–693 (DEVYRAKVVR…EKGRIDASMK (69 aa)). Residues 691 to 737 (SMKALLPRPPKPEHDEKGEKSERPHRPRHHKDHKPKKEFTETPKDSE) form a disordered region. The span at 700–714 (PKPEHDEKGEKSERP) shows a compositional bias: basic and acidic residues. A compositionally biased stretch (basic residues) spans 715–724 (HRPRHHKDHK). Basic and acidic residues predominate over residues 725–737 (PKKEFTETPKDSE).

Belongs to the polyribonucleotide nucleotidyltransferase family. Requires Mg(2+) as cofactor.

Its subcellular location is the cytoplasm. It catalyses the reaction RNA(n+1) + phosphate = RNA(n) + a ribonucleoside 5'-diphosphate. Its function is as follows. Involved in mRNA degradation. Catalyzes the phosphorolysis of single-stranded polyribonucleotides processively in the 3'- to 5'-direction. The chain is Polyribonucleotide nucleotidyltransferase from Streptococcus pneumoniae (strain 70585).